A 328-amino-acid polypeptide reads, in one-letter code: Ribosomal protein L11 methyltransferase (328 aa).

Positions 158, 180, 202, and 246 each coordinate S-adenosyl-L-methionine.

It belongs to the methyltransferase superfamily. PrmA family.

It is found in the cytoplasm. It catalyses the reaction L-lysyl-[protein] + 3 S-adenosyl-L-methionine = N(6),N(6),N(6)-trimethyl-L-lysyl-[protein] + 3 S-adenosyl-L-homocysteine + 3 H(+). In terms of biological role, methylates ribosomal protein L11. The sequence is that of Ribosomal protein L11 methyltransferase from Polynucleobacter necessarius subsp. necessarius (strain STIR1).